We begin with the raw amino-acid sequence, 529 residues long: L-ornithine N(5)-monooxygenase (529 aa).

Residues 100-108 (EKQPQFAWH) and Q119 each bind FAD. A substrate-binding site is contributed by K124. V185 contributes to the FAD binding site. 270-273 (NGQS) is an NADP(+) binding site. Residues 309–312 (NEIF) and N339 each bind substrate. NADP(+) is bound at residue 339–341 (NYG). 493 to 495 (TLL) serves as a coordination point for FAD. S496 serves as a coordination point for substrate.

The protein belongs to the lysine N(6)-hydroxylase/L-ornithine N(5)-oxygenase family. In terms of assembly, homotetramer. Requires FAD as cofactor.

It catalyses the reaction L-ornithine + NADPH + O2 = N(5)-hydroxy-L-ornithine + NADP(+) + H2O. It carries out the reaction L-ornithine + NADH + O2 = N(5)-hydroxy-L-ornithine + NAD(+) + H2O. The protein operates within siderophore biosynthesis. L-ornithine N(5)-monooxygenase; part of the gene cluster that mediates the biosynthesis of hydroxamate-containing siderophores that play a critical role in virulence. Cochliobolus heterostrophus produces extracellular coprogen-type siderophores including coprogen, neocoprogen I and neocoprogen II, as well as the intracellular siderophore ferricrocin. The role of extracellular siderophores is to supply iron to their producers in planta and the intracellular ferricrocin is required for intracellular iron distribution and storage with a crucial role in ascus and ascospore development. SIDA2 catalyzes the conversion of L-ornithine to N(5)-hydroxyornithine, the first step in the biosynthesis of all hydroxamate-containing siderophores. The assembly of extracellular coprogen-type siderophores is then performed by the nonribosomal peptide synthetase (NRPS) NPS6 whereas the intracellular siderophore ferricrocin is assembled by NPS2. This Cochliobolus heterostrophus (strain C4 / ATCC 48331 / race T) (Southern corn leaf blight fungus) protein is L-ornithine N(5)-monooxygenase.